A 286-amino-acid chain; its full sequence is Isopentenyl-diphosphate Delta-isomerase II (286 aa).

The 153-residue stretch at 104-256 folds into the Nudix hydrolase domain; sequence MLHRAFSVFL…GLKLSPWFRL (153 aa). Residues C141 and E203 contribute to the active site.

This sequence belongs to the IPP isomerase type 1 family.

It catalyses the reaction isopentenyl diphosphate = dimethylallyl diphosphate. It functions in the pathway isoprenoid biosynthesis; dimethylallyl diphosphate biosynthesis; dimethylallyl diphosphate from isopentenyl diphosphate: step 1/1. The protein operates within porphyrin-containing compound metabolism; chlorophyll biosynthesis. In terms of biological role, catalyzes the 1,3-allylic rearrangement of the homoallylic substrate isopentenyl (IPP) to its highly electrophilic allylic isomer, dimethylallyl diphosphate (DMAPP). The sequence is that of Isopentenyl-diphosphate Delta-isomerase II (IPI2) from Clarkia breweri (Fairy fans).